Here is a 1228-residue protein sequence, read N- to C-terminus: DNA-directed RNA polymerase subunit beta (1228 aa).

The disordered stretch occupies residues 1175–1204; sequence ESVDEDEQPQGLGAFEIGGDEIEEDKEDDK. A compositionally biased stretch (acidic residues) spans 1192-1202; the sequence is GGDEIEEDKED.

This sequence belongs to the RNA polymerase beta chain family. In terms of assembly, the RNAP catalytic core consists of 2 alpha, 1 beta, 1 beta' and 1 omega subunit. When a sigma factor is associated with the core the holoenzyme is formed, which can initiate transcription.

The enzyme catalyses RNA(n) + a ribonucleoside 5'-triphosphate = RNA(n+1) + diphosphate. DNA-dependent RNA polymerase catalyzes the transcription of DNA into RNA using the four ribonucleoside triphosphates as substrates. This is DNA-directed RNA polymerase subunit beta from Caldicellulosiruptor bescii (strain ATCC BAA-1888 / DSM 6725 / KCTC 15123 / Z-1320) (Anaerocellum thermophilum).